The following is a 245-amino-acid chain: NADH-quinone oxidoreductase subunit C (245 aa).

Residues 1 to 10 are compositionally biased toward basic and acidic residues; the sequence is MSAPQDRTDD. Disordered stretches follow at residues 1–54 and 216–245; these read MSAP…GYGG and PQRK…RSYQ. Residues 11–28 are compositionally biased toward low complexity; the sequence is GGVPVPVTPAGATGGAPA. Positions 39–54 are enriched in gly residues; sequence GMFGDQGTGDVSGYGG.

It belongs to the complex I 30 kDa subunit family. In terms of assembly, NDH-1 is composed of 14 different subunits. Subunits NuoB, C, D, E, F, and G constitute the peripheral sector of the complex.

The protein localises to the cell membrane. The catalysed reaction is a quinone + NADH + 5 H(+)(in) = a quinol + NAD(+) + 4 H(+)(out). NDH-1 shuttles electrons from NADH, via FMN and iron-sulfur (Fe-S) centers, to quinones in the respiratory chain. The immediate electron acceptor for the enzyme in this species is believed to be a menaquinone. Couples the redox reaction to proton translocation (for every two electrons transferred, four hydrogen ions are translocated across the cytoplasmic membrane), and thus conserves the redox energy in a proton gradient. The chain is NADH-quinone oxidoreductase subunit C from Salinispora tropica (strain ATCC BAA-916 / DSM 44818 / JCM 13857 / NBRC 105044 / CNB-440).